Consider the following 723-residue polypeptide: Polyribonucleotide nucleotidyltransferase (723 aa).

Positions 488 and 494 each coordinate Mg(2+). The region spanning 555–614 (PKIITLNIKPEKIKDVIGPGGKQINAIIEETGVKIDIEQDGTVYIASQDQAMNRKAIAII) is the KH domain. Residues 624–692 (GEVYTGKVRR…HQGRVNLSRK (69 aa)) enclose the S1 motif domain. The interval 692–723 (KALLEKKEQPEGDKKPQAEKKFYPKTKKPESK) is disordered. A compositionally biased stretch (basic and acidic residues) spans 693 to 723 (ALLEKKEQPEGDKKPQAEKKFYPKTKKPESK).

Belongs to the polyribonucleotide nucleotidyltransferase family. Mg(2+) serves as cofactor.

It is found in the cytoplasm. The enzyme catalyses RNA(n+1) + phosphate = RNA(n) + a ribonucleoside 5'-diphosphate. Functionally, involved in mRNA degradation. Catalyzes the phosphorolysis of single-stranded polyribonucleotides processively in the 3'- to 5'-direction. The chain is Polyribonucleotide nucleotidyltransferase from Listeria welshimeri serovar 6b (strain ATCC 35897 / DSM 20650 / CCUG 15529 / CIP 8149 / NCTC 11857 / SLCC 5334 / V8).